The sequence spans 156 residues: SsrA-binding protein (156 aa).

It belongs to the SmpB family.

It localises to the cytoplasm. Functionally, required for rescue of stalled ribosomes mediated by trans-translation. Binds to transfer-messenger RNA (tmRNA), required for stable association of tmRNA with ribosomes. tmRNA and SmpB together mimic tRNA shape, replacing the anticodon stem-loop with SmpB. tmRNA is encoded by the ssrA gene; the 2 termini fold to resemble tRNA(Ala) and it encodes a 'tag peptide', a short internal open reading frame. During trans-translation Ala-aminoacylated tmRNA acts like a tRNA, entering the A-site of stalled ribosomes, displacing the stalled mRNA. The ribosome then switches to translate the ORF on the tmRNA; the nascent peptide is terminated with the 'tag peptide' encoded by the tmRNA and targeted for degradation. The ribosome is freed to recommence translation, which seems to be the essential function of trans-translation. In Clostridium perfringens (strain 13 / Type A), this protein is SsrA-binding protein.